A 678-amino-acid chain; its full sequence is DNA ligase (678 aa).

Residues 47 to 51 (DSDYD), 96 to 97 (SL), and E122 contribute to the NAD(+) site. The active-site N6-AMP-lysine intermediate is K124. NAD(+)-binding residues include R145, E182, K300, and K324. Zn(2+)-binding residues include C418, C421, C436, and C442. The 77-residue stretch at 602 to 678 (AYNESFTGKT…ILEDNLKDLL (77 aa)) folds into the BRCT domain.

Belongs to the NAD-dependent DNA ligase family. LigA subfamily. It depends on Mg(2+) as a cofactor. Requires Mn(2+) as cofactor.

The enzyme catalyses NAD(+) + (deoxyribonucleotide)n-3'-hydroxyl + 5'-phospho-(deoxyribonucleotide)m = (deoxyribonucleotide)n+m + AMP + beta-nicotinamide D-nucleotide.. In terms of biological role, DNA ligase that catalyzes the formation of phosphodiester linkages between 5'-phosphoryl and 3'-hydroxyl groups in double-stranded DNA using NAD as a coenzyme and as the energy source for the reaction. It is essential for DNA replication and repair of damaged DNA. The chain is DNA ligase from Francisella tularensis subsp. holarctica (strain FTNF002-00 / FTA).